Reading from the N-terminus, the 261-residue chain is Maspardin (261 aa).

The 73-residue stretch at Phe87–Met159 folds into the AB hydrolase-1 domain. Ser257 is modified (phosphoserine).

It belongs to the AB hydrolase superfamily. In terms of assembly, interacts with CD4. Interacts with ALDH16A1.

It is found in the cytoplasm. Its function is as follows. May play a role as a negative regulatory factor in CD4-dependent T-cell activation. This is Maspardin (Spg21) from Rattus norvegicus (Rat).